A 219-amino-acid chain; its full sequence is Uracil-DNA glycosylase (219 aa).

Aspartate 61 (proton acceptor) is an active-site residue.

This sequence belongs to the uracil-DNA glycosylase (UDG) superfamily. UNG family.

It is found in the cytoplasm. The enzyme catalyses Hydrolyzes single-stranded DNA or mismatched double-stranded DNA and polynucleotides, releasing free uracil.. Functionally, excises uracil residues from the DNA which can arise as a result of misincorporation of dUMP residues by DNA polymerase or due to deamination of cytosine. This chain is Uracil-DNA glycosylase, found in Neisseria gonorrhoeae (strain ATCC 700825 / FA 1090).